The sequence spans 113 residues: ATP-dependent Clp protease adapter protein ClpS (113 aa).

The span at 1-11 (MTRPTIPPGPP) shows a compositional bias: pro residues. Disordered regions lie at residues 1 to 24 (MTRP…ERTE) and 92 to 113 (TAHA…SEGE).

The protein belongs to the ClpS family. As to quaternary structure, binds to the N-terminal domain of the chaperone ClpA.

Its function is as follows. Involved in the modulation of the specificity of the ClpAP-mediated ATP-dependent protein degradation. In Deinococcus radiodurans (strain ATCC 13939 / DSM 20539 / JCM 16871 / CCUG 27074 / LMG 4051 / NBRC 15346 / NCIMB 9279 / VKM B-1422 / R1), this protein is ATP-dependent Clp protease adapter protein ClpS.